The sequence spans 635 residues: Leucine aminopeptidase 2-2 (635 aa).

Residues Q141 to Q143 and P265 to E270 each bind substrate. H294 contributes to the Zn(2+) binding site. E295 (proton acceptor) is an active-site residue. Positions 298 and 317 each coordinate Zn(2+). Y399 serves as the catalytic Proton donor.

This sequence belongs to the peptidase M1 family. Zn(2+) is required as a cofactor.

The protein resides in the cytoplasm. Its subcellular location is the nucleus. The catalysed reaction is an epoxide + H2O = an ethanediol. Its function is as follows. Aminopeptidase that preferentially cleaves di- and tripeptides. Also has low epoxide hydrolase activity (in vitro). Can hydrolyze the epoxide leukotriene LTA(4) but it forms preferentially 5,6-dihydroxy-7,9,11,14-eicosatetraenoic acid rather than the cytokine leukotriene B(4) as the product compared to the homologous mammalian enzyme (in vitro). This chain is Leucine aminopeptidase 2-2 (LTA4), found in Scheffersomyces stipitis (strain ATCC 58785 / CBS 6054 / NBRC 10063 / NRRL Y-11545) (Yeast).